Reading from the N-terminus, the 530-residue chain is Phosphoenolpyruvate carboxykinase (ATP) (530 aa).

Residues Arg-60, Tyr-195, and Lys-201 each contribute to the substrate site. Residues Lys-201, His-221, and 237-245 (GLSGTGKTT) contribute to the ATP site. The Mn(2+) site is built by Lys-201 and His-221. A Mn(2+)-binding site is contributed by Asp-258. Residues Glu-286, Arg-324, and Ser-449 each coordinate ATP. Residue Arg-324 coordinates substrate.

The protein belongs to the phosphoenolpyruvate carboxykinase (ATP) family. Mn(2+) serves as cofactor.

The protein resides in the cytoplasm. The enzyme catalyses oxaloacetate + ATP = phosphoenolpyruvate + ADP + CO2. It functions in the pathway carbohydrate biosynthesis; gluconeogenesis. Its function is as follows. Involved in the gluconeogenesis. Catalyzes the conversion of oxaloacetate (OAA) to phosphoenolpyruvate (PEP) through direct phosphoryl transfer between the nucleoside triphosphate and OAA. The chain is Phosphoenolpyruvate carboxykinase (ATP) from Geotalea uraniireducens (strain Rf4) (Geobacter uraniireducens).